The following is a 118-amino-acid chain: Basic phospholipase A2 2 (118 aa).

7 cysteine pairs are disulfide-bonded: Cys11–Cys71, Cys27–Cys117, Cys29–Cys45, Cys44–Cys98, Cys51–Cys91, Cys60–Cys84, and Cys78–Cys89. The Ca(2+) site is built by Tyr28, Gly30, and Gly32. His48 is an active-site residue. Asp49 contributes to the Ca(2+) binding site. The active site involves Asp92.

The protein belongs to the phospholipase A2 family. Group I subfamily. D49 sub-subfamily. The cofactor is Ca(2+). Expressed by the venom gland.

The protein localises to the secreted. The catalysed reaction is a 1,2-diacyl-sn-glycero-3-phosphocholine + H2O = a 1-acyl-sn-glycero-3-phosphocholine + a fatty acid + H(+). Its function is as follows. Snake venom phospholipase A2 (PLA2) that inhibits neuromuscular transmission by blocking acetylcholine release from the nerve termini. PLA2 catalyzes the calcium-dependent hydrolysis of the 2-acyl groups in 3-sn-phosphoglycerides. The polypeptide is Basic phospholipase A2 2 (Laticauda colubrina (Yellow-lipped sea krait)).